Here is a 351-residue protein sequence, read N- to C-terminus: Protein RecA (351 aa).

73–80 is a binding site for ATP; the sequence is GPESSGKT.

It belongs to the RecA family.

It localises to the cytoplasm. Its function is as follows. Can catalyze the hydrolysis of ATP in the presence of single-stranded DNA, the ATP-dependent uptake of single-stranded DNA by duplex DNA, and the ATP-dependent hybridization of homologous single-stranded DNAs. It interacts with LexA causing its activation and leading to its autocatalytic cleavage. The sequence is that of Protein RecA from Herbaspirillum seropedicae.